Consider the following 114-residue polypeptide: Large ribosomal subunit protein uL22 (114 aa).

Belongs to the universal ribosomal protein uL22 family. As to quaternary structure, part of the 50S ribosomal subunit.

Functionally, this protein binds specifically to 23S rRNA; its binding is stimulated by other ribosomal proteins, e.g. L4, L17, and L20. It is important during the early stages of 50S assembly. It makes multiple contacts with different domains of the 23S rRNA in the assembled 50S subunit and ribosome. Its function is as follows. The globular domain of the protein is located near the polypeptide exit tunnel on the outside of the subunit, while an extended beta-hairpin is found that lines the wall of the exit tunnel in the center of the 70S ribosome. The chain is Large ribosomal subunit protein uL22 from Mycoplasmopsis agalactiae (strain NCTC 10123 / CIP 59.7 / PG2) (Mycoplasma agalactiae).